The primary structure comprises 230 residues: Secretory carrier-associated membrane protein 4 (230 aa).

The Cytoplasmic portion of the chain corresponds to 1-39 (MAGKENNFPPLPPFLPLKPCFYQDFSDEIPVEHQVLVKR). Transmembrane regions (helical) follow at residues 40–60 (IYRL…ACLA), 61–81 (WWIA…LVLF), 106–126 (MTFF…AIGF), and 149–169 (VVML…AVTI). At 170–230 (VKVHRIYRGA…SYSSSGGHWP (61 aa)) the chain is on the cytoplasmic side. Threonine 194 is modified (phosphothreonine).

This sequence belongs to the SCAMP family.

The protein resides in the membrane. Probably involved in membrane protein trafficking. This is Secretory carrier-associated membrane protein 4 (Scamp4) from Mus musculus (Mouse).